A 151-amino-acid polypeptide reads, in one-letter code: Ribosome maturation factor RimP (151 aa).

It belongs to the RimP family.

It localises to the cytoplasm. Its function is as follows. Required for maturation of 30S ribosomal subunits. The polypeptide is Ribosome maturation factor RimP (Caldicellulosiruptor bescii (strain ATCC BAA-1888 / DSM 6725 / KCTC 15123 / Z-1320) (Anaerocellum thermophilum)).